The chain runs to 273 residues: Undecaprenyl-diphosphatase (273 aa).

Transmembrane regions (helical) follow at residues 4 to 24 (LILI…FLPI), 43 to 63 (KAQV…CWEY), 82 to 102 (FVLN…LFIK), 108 to 128 (LFHP…ILWA), 183 to 203 (AAEF…FYDV), 217 to 237 (MFVV…RGFI), and 253 to 273 (IGFG…WSAG).

The protein belongs to the UppP family.

The protein resides in the cell inner membrane. It carries out the reaction di-trans,octa-cis-undecaprenyl diphosphate + H2O = di-trans,octa-cis-undecaprenyl phosphate + phosphate + H(+). Functionally, catalyzes the dephosphorylation of undecaprenyl diphosphate (UPP). Confers resistance to bacitracin. This chain is Undecaprenyl-diphosphatase, found in Nitrosomonas eutropha (strain DSM 101675 / C91 / Nm57).